The primary structure comprises 364 residues: Capsular polysaccharide phosphotransferase fcs1 (364 aa).

This sequence belongs to the stealth family.

Part of a group II capsule biosynthesis locus. This Haemophilus influenzae protein is Capsular polysaccharide phosphotransferase fcs1 (fcs1).